The chain runs to 388 residues: Putative O-antigen polymerase (388 aa).

9 helical membrane-spanning segments follow: residues 23–43, 57–77, 97–117, 143–163, 180–200, 215–235, 312–332, 338–358, and 361–381; these read IFYPAVCVNIIFALVLLGYEI, LIFLLCNVLTFTLSCLLTESV, VHNVGLLVISFSMIYICMRLS, NFSAYMQPIILTTFALFIWSK, IVFIFAIILNTGKQIVFMVII, VYLITAVGVLFSLYMLFLRGL, ISAELSYLMMVIHGCISGVLW, YISVKIFYSYFIYTFSFIFYH, and FMTNISSWIQITLCIIVFSQF.

It is found in the cell inner membrane. Functionally, may function in vitro as a polymerase that catalyzes the polymerization of the O-antigen repeat units on the periplasmic face of the inner membrane, leading to the formation of the lipid-linked O-antigen molecule. However, E.coli K12 strains do not normally produce the O-antigen in vivo due to mutations in the rfb gene cluster. K12 strains are phenotypically rough, their lipopolysaccharide having a complete core structure, but no O-antigen. The sequence is that of Putative O-antigen polymerase from Escherichia coli (strain K12).